A 324-amino-acid polypeptide reads, in one-letter code: Acetyl-coenzyme A carboxylase carboxyl transferase subunit alpha (324 aa).

A CoA carboxyltransferase C-terminal domain is found at 44 to 298 (ILQRKLLNLK…KNKIRDQLDF (255 aa)).

Belongs to the AccA family. Acetyl-CoA carboxylase is a heterohexamer composed of biotin carboxyl carrier protein (accB), biotin carboxylase (accC) and two subunits each of ACCase subunit alpha (accA) and ACCase subunit beta (accD).

It localises to the plastid. It is found in the chloroplast. It catalyses the reaction N(6)-carboxybiotinyl-L-lysyl-[protein] + acetyl-CoA = N(6)-biotinyl-L-lysyl-[protein] + malonyl-CoA. It functions in the pathway lipid metabolism; malonyl-CoA biosynthesis; malonyl-CoA from acetyl-CoA: step 1/1. Functionally, component of the acetyl coenzyme A carboxylase (ACC) complex. First, biotin carboxylase catalyzes the carboxylation of biotin on its carrier protein (BCCP) and then the CO(2) group is transferred by the carboxyltransferase to acetyl-CoA to form malonyl-CoA. The polypeptide is Acetyl-coenzyme A carboxylase carboxyl transferase subunit alpha (Cyanidium caldarium (Red alga)).